A 156-amino-acid chain; its full sequence is Transcription elongation factor GreA (156 aa).

The stretch at 6 to 75 (IYLTKEGYEK…ELENMLSKAE (70 aa)) forms a coiled coil.

It belongs to the GreA/GreB family.

Necessary for efficient RNA polymerase transcription elongation past template-encoded arresting sites. The arresting sites in DNA have the property of trapping a certain fraction of elongating RNA polymerases that pass through, resulting in locked ternary complexes. Cleavage of the nascent transcript by cleavage factors such as GreA or GreB allows the resumption of elongation from the new 3'terminus. GreA releases sequences of 2 to 3 nucleotides. The chain is Transcription elongation factor GreA from Thermosipho africanus (strain TCF52B).